Reading from the N-terminus, the 193-residue chain is dCTP deaminase (193 aa).

DCTP is bound by residues 110 to 115 (RSSLAR), D128, 136 to 138 (VLE), Y171, K178, and Q182. E138 serves as the catalytic Proton donor/acceptor. The tract at residues 169 to 193 (RPYNRRQDAKYRDQQGAVASRIDKD) is disordered.

The protein belongs to the dCTP deaminase family. Homotrimer.

The enzyme catalyses dCTP + H2O + H(+) = dUTP + NH4(+). Its pathway is pyrimidine metabolism; dUMP biosynthesis; dUMP from dCTP (dUTP route): step 1/2. Functionally, catalyzes the deamination of dCTP to dUTP. The protein is dCTP deaminase of Salmonella paratyphi B (strain ATCC BAA-1250 / SPB7).